The primary structure comprises 333 residues: Dehydrodolichyl diphosphate synthase complex subunit DHDDS (333 aa).

(2E,6E)-farnesyl diphosphate-binding residues include D34, G35, R37, R38, and R85. Isopentenyl diphosphate-binding residues include D34, G35, R37, R38, R85, R205, R211, and S213. D34 contributes to the Mg(2+) binding site.

It belongs to the UPP synthase family. As to quaternary structure, the active dehydrodolichyl diphosphate synthase complex is a heterotetramer composed of a dimer of heterodimer of DHDDS and NUS1. Interacts with NPC2. It depends on Mg(2+) as a cofactor. In terms of tissue distribution, ubiquitous. Expressed at high levels in testis and kidney. Expressed in epididymis (at protein level).

Its subcellular location is the endoplasmic reticulum membrane. The enzyme catalyses n isopentenyl diphosphate + (2E,6E)-farnesyl diphosphate = a di-trans,poly-cis-polyprenyl diphosphate + n diphosphate. Its pathway is protein modification; protein glycosylation. The protein operates within lipid metabolism. Its activity is regulated as follows. Activated by phospholipids including cardiolipin, phosphatidylcholine, phosphatidylethanolamine, phosphatidylinositol and phosphatidylserine. In terms of biological role, with NUS1, forms the dehydrodolichyl diphosphate synthase (DDS) complex, an essential component of the dolichol monophosphate (Dol-P) biosynthetic machinery. Both subunits contribute to enzymatic activity, i.e. condensation of multiple copies of isopentenyl pyrophosphate (IPP) to farnesyl pyrophosphate (FPP) to produce dehydrodolichyl diphosphate (Dedol-PP), a precursor of dolichol phosphate which is utilized as a sugar carrier in protein glycosylation in the endoplasmic reticulum (ER). Synthesizes long-chain polyprenols, mostly of C95 and C100 chain length. Regulates the glycosylation and stability of nascent NPC2, thereby promoting trafficking of LDL-derived cholesterol. In Homo sapiens (Human), this protein is Dehydrodolichyl diphosphate synthase complex subunit DHDDS.